The following is a 229-amino-acid chain: Deleted in azoospermia-like (229 aa).

The RRM domain maps to 47–128 (NTLFVGGIDM…PAIMKERSSR (82 aa)). One can recognise a DAZ domain in the interval 172–198 (PYSYSSPPGIMVPQVPMNYAQTTYAYQ).

Belongs to the RRM DAZ family. In terms of tissue distribution, testis and ovary specific. In ovary, it is localized in the cortex of oocytes. At the onset of embryogenesis, maternal product is located at the vegetal pole, before migrating toward blastomeres through cytoplasmic streams as early embryogenesis proceededs.

It is found in the cytoplasm. In terms of biological role, RNA-binding protein involved in gametogenesis in both males and females. Acts by binding to the 3'-UTR of mRNA, specifically recognizing GUU triplets, and promoting the translation of key transcripts. Establishes oocyte polarity through interaction with Bucky ball (BUC). Interacts with Bucky ball (BUC) mRNA to mediate Balbiani body formation and oocyte polarity during early oogenesis. The polypeptide is Deleted in azoospermia-like (dazl) (Danio rerio (Zebrafish)).